The following is a 299-amino-acid chain: Delta-9 desaturase-like 5 protein (299 aa).

The next 2 membrane-spanning stretches (helical) occupy residues 31 to 51 and 55 to 75; these read ADII…LAPF and WEAL…ITFS. A Histidine box-1 motif is present at residues 77 to 82; that stretch reads HRNLAH. A Histidine box-2 motif is present at residues 114-118; the sequence is HRFHH. Transmembrane regions (helical) follow at residues 174–194 and 199–219; these read IGFH…LPYL and GVGG…CHIW. The Histidine box-3 signature appears at 246-250; sequence HNNHH.

Belongs to the fatty acid desaturase type 1 family. Fe cation is required as a cofactor.

The protein localises to the endoplasmic reticulum membrane. The protein operates within lipid metabolism; polyunsaturated fatty acid biosynthesis. This chain is Delta-9 desaturase-like 5 protein, found in Arabidopsis thaliana (Mouse-ear cress).